The sequence spans 287 residues: Uroplakin-3a (287 aa).

Positions 1–18 (MPPLWALLALGCLRFGSA) are cleaved as a signal peptide. Residues 19 to 207 (VNLQPQLASV…DTWPGRRSGG (189 aa)) lie on the Lumenal side of the membrane. N-linked (GlcNAc...) asparagine glycosylation is found at N74, N139, and N170. Residues 208–235 (MIVITSILGSLPFFLLVGFAGAIALSLV) form a helical membrane-spanning segment. Over 236–287 (DMGSSDGETTHDSQITQEAVPKSLGASESSYTSVNRGPPLDRAEVYSSKLQD) the chain is Cytoplasmic. The disordered stretch occupies residues 242–287 (GETTHDSQITQEAVPKSLGASESSYTSVNRGPPLDRAEVYSSKLQD). Polar residues predominate over residues 261-270 (ASESSYTSVN).

It belongs to the uroplakin-3 family. Heterodimer with uroplakin-1B (UPK1B). In terms of tissue distribution, expressed in ureter.

It localises to the endoplasmic reticulum membrane. In terms of biological role, component of the asymmetric unit membrane (AUM); a highly specialized biomembrane elaborated by terminally differentiated urothelial cells. May play an important role in AUM-cytoskeleton interaction in terminally differentiated urothelial cells. It also contributes to the formation of urothelial glycocalyx which may play an important role in preventing bacterial adherence. In Homo sapiens (Human), this protein is Uroplakin-3a (UPK3A).